A 388-amino-acid polypeptide reads, in one-letter code: MAPVVKNEPQHAKILAIGTANPPNVFHQKDYPDFLFRVTKNEHRTDLREKFDRICEKSRTKKRYLHLTEEMLKANPNIYTYGAPSLNVRQDICNIEVPKLGQEASLKAIKEWGQPISKITHLIFCTASCVDMPGCDFQLIKLLGLDPSVTRTMIYEAGCYAGATVLRMAKDFAENNKGARVLVVCAEITTVFFHGLTDTHLDILVGQALFADGASAVIVGANPEPEIERPLFEIVACRQTILPNSEHGVVANIREMGFNYYLSGDVPKFVGGNVVDFMTKTFEKVDGKNKDWNSLFFSVHPGGPAIVDQVEEKLGLKEGKLRATRHVLSEYGNMGAPTVHFILDEMRNKSIEEGKTTTGEGLEWGVVIGIGPGLTVETAVLRSEFITY.

Cys-159 is a catalytic residue.

The protein belongs to the thiolase-like superfamily. Chalcone/stilbene synthases family. As to quaternary structure, homodimer.

It catalyses the reaction 2-hydroxybenzoyl-CoA + malonyl-CoA = 4-hydroxycoumarin + CO2 + 2 CoA. Type III polyketide synthase involved preferentially in the biosynthesis of 4-hydroxycoumarin from salicoyl-CoA. Can also use benzoyl-CoA and malonyl-CoA to produce 3,5-dihydroxybiphenyl as a major product and benzoyldiacetic acid lactone as a minor side product. Can also use m-hydroxybenzoyl-CoA as substrate, producing m-hydroxybenzoyl diacetic acid lactone as a derailment product. No activity with p-hydroxybenzoyl-CoA, CoA-linked cinnamic acids or acetyl-CoA. The polypeptide is 4-hydroxycoumarin synthase 2 (BIS3) (Sorbus aucuparia (European mountain ash)).